The following is a 111-amino-acid chain: Nucleoid-associated protein NGK_1136 (111 aa).

This sequence belongs to the YbaB/EbfC family. As to quaternary structure, homodimer.

The protein localises to the cytoplasm. Its subcellular location is the nucleoid. Its function is as follows. Binds to DNA and alters its conformation. May be involved in regulation of gene expression, nucleoid organization and DNA protection. The sequence is that of Nucleoid-associated protein NGK_1136 from Neisseria gonorrhoeae (strain NCCP11945).